Reading from the N-terminus, the 369-residue chain is NAD(P)H-quinone oxidoreductase subunit 1, chloroplastic (369 aa).

The next 5 membrane-spanning stretches (helical) occupy residues 25–45, 104–124, 130–150, 270–290, and 306–326; these read FGFIWIITPILTYTLGVTIGI, VMVVVPVFLSYLVIPLGHGII, IGVFFWIAVSSVAPLGLLTAG, LSATILYLGGWNSPIPFLFLP, and VISITIAIIITLAKAYSFLFI.

It belongs to the complex I subunit 1 family. In terms of assembly, NDH is composed of at least 16 different subunits, 5 of which are encoded in the nucleus.

It is found in the plastid. Its subcellular location is the chloroplast thylakoid membrane. It carries out the reaction a plastoquinone + NADH + (n+1) H(+)(in) = a plastoquinol + NAD(+) + n H(+)(out). It catalyses the reaction a plastoquinone + NADPH + (n+1) H(+)(in) = a plastoquinol + NADP(+) + n H(+)(out). NDH shuttles electrons from NAD(P)H:plastoquinone, via FMN and iron-sulfur (Fe-S) centers, to quinones in the photosynthetic chain and possibly in a chloroplast respiratory chain. The immediate electron acceptor for the enzyme in this species is believed to be plastoquinone. Couples the redox reaction to proton translocation, and thus conserves the redox energy in a proton gradient. The chain is NAD(P)H-quinone oxidoreductase subunit 1, chloroplastic from Huperzia lucidula (Shining clubmoss).